Reading from the N-terminus, the 281-residue chain is Bis(5'-nucleosyl)-tetraphosphatase, symmetrical (281 aa).

Belongs to the Ap4A hydrolase family.

It catalyses the reaction P(1),P(4)-bis(5'-adenosyl) tetraphosphate + H2O = 2 ADP + 2 H(+). Its function is as follows. Hydrolyzes diadenosine 5',5'''-P1,P4-tetraphosphate to yield ADP. In Pectobacterium carotovorum subsp. carotovorum (strain PC1), this protein is Bis(5'-nucleosyl)-tetraphosphatase, symmetrical.